A 553-amino-acid polypeptide reads, in one-letter code: Methyl-coenzyme M reductase subunit alpha (553 aa).

Gln-151 serves as a coordination point for coenzyme F430. Coenzyme B-binding positions include Arg-229, 260 to 261 (KH), and Arg-274. Tyr-336 and Tyr-447 together coordinate coenzyme M.

It belongs to the methyl-coenzyme M reductase alpha subunit family. As to quaternary structure, MCR is a hexamer of two alpha, two beta, and two gamma chains, forming a dimer of heterotrimers. Coenzyme F430 is required as a cofactor.

The protein localises to the cytoplasm. The catalysed reaction is coenzyme B + methyl-coenzyme M = methane + coenzyme M-coenzyme B heterodisulfide. Its pathway is one-carbon metabolism; methyl-coenzyme M reduction; methane from methyl-coenzyme M: step 1/1. Component of the methyl-coenzyme M reductase (MCR) I that catalyzes the reductive cleavage of methyl-coenzyme M (CoM-S-CH3 or 2-(methylthio)ethanesulfonate) using coenzyme B (CoB or 7-mercaptoheptanoylthreonine phosphate) as reductant which results in the production of methane and the mixed heterodisulfide of CoB and CoM (CoM-S-S-CoB). This is the final step in methanogenesis. This is Methyl-coenzyme M reductase subunit alpha (mcrA) from Methanococcus vannielii.